The chain runs to 152 residues: 3-dehydroquinate dehydratase (152 aa).

Y26 acts as the Proton acceptor in catalysis. Residues N78, H84, and D91 each coordinate substrate. The active-site Proton donor is H104. Substrate-binding positions include 105–106 (LS) and R115.

Belongs to the type-II 3-dehydroquinase family. As to quaternary structure, homododecamer.

It carries out the reaction 3-dehydroquinate = 3-dehydroshikimate + H2O. It functions in the pathway metabolic intermediate biosynthesis; chorismate biosynthesis; chorismate from D-erythrose 4-phosphate and phosphoenolpyruvate: step 3/7. Its function is as follows. Catalyzes a trans-dehydration via an enolate intermediate. The polypeptide is 3-dehydroquinate dehydratase (Idiomarina loihiensis (strain ATCC BAA-735 / DSM 15497 / L2-TR)).